The primary structure comprises 145 residues: MIALIQRVKSASVQVDAEIVGKIDSGLLVFLGVEQQDNIEAMEKLATKVISYRIFNDENGKMNLSLKQAGGALLCVSQFTLAADTGRGLRPSFSKAATPEQANHLYEAFIDYCRLQGVETQIGRFGADMQVSLINDGPVTFNLQV.

The Gly-cisPro motif, important for rejection of L-amino acids motif lies at 137-138 (GP).

It belongs to the DTD family. As to quaternary structure, homodimer.

The protein localises to the cytoplasm. The enzyme catalyses glycyl-tRNA(Ala) + H2O = tRNA(Ala) + glycine + H(+). It catalyses the reaction a D-aminoacyl-tRNA + H2O = a tRNA + a D-alpha-amino acid + H(+). An aminoacyl-tRNA editing enzyme that deacylates mischarged D-aminoacyl-tRNAs. Also deacylates mischarged glycyl-tRNA(Ala), protecting cells against glycine mischarging by AlaRS. Acts via tRNA-based rather than protein-based catalysis; rejects L-amino acids rather than detecting D-amino acids in the active site. By recycling D-aminoacyl-tRNA to D-amino acids and free tRNA molecules, this enzyme counteracts the toxicity associated with the formation of D-aminoacyl-tRNA entities in vivo and helps enforce protein L-homochirality. The chain is D-aminoacyl-tRNA deacylase from Shewanella denitrificans (strain OS217 / ATCC BAA-1090 / DSM 15013).